Consider the following 145-residue polypeptide: Small ribosomal subunit protein bS6 (145 aa).

It belongs to the bacterial ribosomal protein bS6 family.

Functionally, binds together with bS18 to 16S ribosomal RNA. This is Small ribosomal subunit protein bS6 from Mycoplasmopsis agalactiae (strain NCTC 10123 / CIP 59.7 / PG2) (Mycoplasma agalactiae).